The chain runs to 37 residues: Cytochrome b6-f complex subunit 5 (37 aa).

The helical transmembrane segment at 5–25 threads the bilayer; the sequence is FLFGIVLGLIPITLAGLFVTA.

The protein belongs to the PetG family. In terms of assembly, the 4 large subunits of the cytochrome b6-f complex are cytochrome b6, subunit IV (17 kDa polypeptide, PetD), cytochrome f and the Rieske protein, while the 4 small subunits are PetG, PetL, PetM and PetN. The complex functions as a dimer.

The protein resides in the plastid thylakoid membrane. Component of the cytochrome b6-f complex, which mediates electron transfer between photosystem II (PSII) and photosystem I (PSI), cyclic electron flow around PSI, and state transitions. PetG is required for either the stability or assembly of the cytochrome b6-f complex. The chain is Cytochrome b6-f complex subunit 5 from Cuscuta reflexa (Southern Asian dodder).